A 158-amino-acid chain; its full sequence is MSTSHTKLELALDLQIATDNKQLPTQQDFELWVRTALRNTMTEAELTVRVVDAEESQALNSTYRGKDKPTNVLSFPFEAPAEIELPLLGDLIICASVVEHEAIQQNKPLQAHWAHMVVHGCLHLLGYDHINDIEAEEMESIETQLIESLGFNNPYKEQ.

Zn(2+) contacts are provided by H119, H123, and H129.

Belongs to the endoribonuclease YbeY family. Requires Zn(2+) as cofactor.

It is found in the cytoplasm. Single strand-specific metallo-endoribonuclease involved in late-stage 70S ribosome quality control and in maturation of the 3' terminus of the 16S rRNA. The protein is Endoribonuclease YbeY of Shewanella woodyi (strain ATCC 51908 / MS32).